Reading from the N-terminus, the 145-residue chain is Transmembrane protein 170A (145 aa).

Residues 1-50 (MIEALIVGEMQDVQIGFVKQILSLNLVPRSNNTTCGNNTSLCDFSEMWYG) are Lumenal-facing. N-linked (GlcNAc...) asparagine glycosylation is found at N31 and N37. The helical transmembrane segment at 51-71 (VFLWAVVSSLIFHLPAALLAL) threads the bilayer. Residues 72–81 (ATLRRHKVAR) lie on the Cytoplasmic side of the membrane. The helical transmembrane segment at 82 to 102 (FFPLGILLMGIIGPLFGGVLT) threads the bilayer. Over 103–117 (SAAIAGVYKAAGKSM) the chain is Lumenal. Residues 118 to 138 (FSLEALVFGVGQSLFIFIISF) form a helical membrane-spanning segment. At 139 to 145 (LRILATL) the chain is on the cytoplasmic side.

It belongs to the TMEM170 family.

It is found in the endoplasmic reticulum membrane. The protein localises to the nucleus envelope. In terms of biological role, may regulate membrane morphogenesis in the endoplasmic reticulum (ER) by promoting ER sheet formation at the expense of ER tubules. This Danio rerio (Zebrafish) protein is Transmembrane protein 170A (tmem170a).